The sequence spans 425 residues: D-tagatose 6-phosphate 4-epimerase (425 aa).

It belongs to the GatZ/KbaZ family.

The catalysed reaction is keto-D-tagatose 6-phosphate = keto-D-fructose 6-phosphate. The protein operates within carbohydrate metabolism. Its function is as follows. Involved in galactitol and D-altritol catabolism. Catalyzes the epimerization of D-tagatose 6-phosphate to D-fructose 6-phosphate. This is D-tagatose 6-phosphate 4-epimerase from Agrobacterium fabrum (strain C58 / ATCC 33970) (Agrobacterium tumefaciens (strain C58)).